Here is a 441-residue protein sequence, read N- to C-terminus: tRNA(Ile)-lysidine synthase (441 aa).

Residue 27–32 (SGGVDS) participates in ATP binding.

It belongs to the tRNA(Ile)-lysidine synthase family.

The protein resides in the cytoplasm. It catalyses the reaction cytidine(34) in tRNA(Ile2) + L-lysine + ATP = lysidine(34) in tRNA(Ile2) + AMP + diphosphate + H(+). Functionally, ligates lysine onto the cytidine present at position 34 of the AUA codon-specific tRNA(Ile) that contains the anticodon CAU, in an ATP-dependent manner. Cytidine is converted to lysidine, thus changing the amino acid specificity of the tRNA from methionine to isoleucine. The polypeptide is tRNA(Ile)-lysidine synthase (Proteus mirabilis (strain HI4320)).